Here is a 364-residue protein sequence, read N- to C-terminus: Probable dual-specificity RNA methyltransferase RlmN (364 aa).

The Proton acceptor role is filled by Glu109. In terms of domain architecture, Radical SAM core spans 123-351; sequence PKARLTVCVS…VSVRYSRGLE (229 aa). Cysteines 130 and 356 form a disulfide. Residues Cys137, Cys141, and Cys144 each contribute to the [4Fe-4S] cluster site. S-adenosyl-L-methionine is bound by residues 184 to 185, Ser214, 237 to 239, and Asn313; these read GE and SLH. The active-site S-methylcysteine intermediate is Cys356.

The protein belongs to the radical SAM superfamily. RlmN family. [4Fe-4S] cluster serves as cofactor.

Its subcellular location is the cytoplasm. It carries out the reaction adenosine(2503) in 23S rRNA + 2 reduced [2Fe-2S]-[ferredoxin] + 2 S-adenosyl-L-methionine = 2-methyladenosine(2503) in 23S rRNA + 5'-deoxyadenosine + L-methionine + 2 oxidized [2Fe-2S]-[ferredoxin] + S-adenosyl-L-homocysteine. The enzyme catalyses adenosine(37) in tRNA + 2 reduced [2Fe-2S]-[ferredoxin] + 2 S-adenosyl-L-methionine = 2-methyladenosine(37) in tRNA + 5'-deoxyadenosine + L-methionine + 2 oxidized [2Fe-2S]-[ferredoxin] + S-adenosyl-L-homocysteine. Specifically methylates position 2 of adenine 2503 in 23S rRNA and position 2 of adenine 37 in tRNAs. The protein is Probable dual-specificity RNA methyltransferase RlmN of Nostoc punctiforme (strain ATCC 29133 / PCC 73102).